The chain runs to 200 residues: MAEQNILTTPSPNADTTIVPPGSPHTHTEQPSGGHGGAFPPFESHTFLAQLIWLALAFGLLYYLMSKVALPRIEAILGDRAGRLSSDLNEAQRMKAEADAAGAAYETSLREAQAKAQAIAQETRNSLSAEADAKRKTLEAELNQRLAASEATIRARTSEAMGNVRTIAGETASAIVERLTGQAPDQASLNRALDATPAVH.

The span at Met1–Thr16 shows a compositional bias: polar residues. The disordered stretch occupies residues Met1–Ala38. A helical transmembrane segment spans residues Thr46–Ser66.

It belongs to the ATPase B chain family. In terms of assembly, F-type ATPases have 2 components, F(1) - the catalytic core - and F(0) - the membrane proton channel. F(1) has five subunits: alpha(3), beta(3), gamma(1), delta(1), epsilon(1). F(0) has three main subunits: a(1), b(2) and c(10-14). The alpha and beta chains form an alternating ring which encloses part of the gamma chain. F(1) is attached to F(0) by a central stalk formed by the gamma and epsilon chains, while a peripheral stalk is formed by the delta and b chains.

The protein resides in the cell inner membrane. Functionally, f(1)F(0) ATP synthase produces ATP from ADP in the presence of a proton or sodium gradient. F-type ATPases consist of two structural domains, F(1) containing the extramembraneous catalytic core and F(0) containing the membrane proton channel, linked together by a central stalk and a peripheral stalk. During catalysis, ATP synthesis in the catalytic domain of F(1) is coupled via a rotary mechanism of the central stalk subunits to proton translocation. Its function is as follows. Component of the F(0) channel, it forms part of the peripheral stalk, linking F(1) to F(0). The b'-subunit is a diverged and duplicated form of b found in plants and photosynthetic bacteria. The chain is ATP synthase subunit b 2 (atpF2) from Methylorubrum populi (strain ATCC BAA-705 / NCIMB 13946 / BJ001) (Methylobacterium populi).